An 883-amino-acid chain; its full sequence is DNA mismatch repair protein MutS (883 aa).

633–640 contacts ATP; it reads GPNMGGKS.

This sequence belongs to the DNA mismatch repair MutS family.

Functionally, this protein is involved in the repair of mismatches in DNA. It is possible that it carries out the mismatch recognition step. This protein has a weak ATPase activity. The chain is DNA mismatch repair protein MutS from Bordetella pertussis (strain Tohama I / ATCC BAA-589 / NCTC 13251).